The following is a 309-amino-acid chain: Elongation factor Ts (309 aa).

Positions 82–85 (TDFV) are involved in Mg(2+) ion dislocation from EF-Tu.

Belongs to the EF-Ts family.

The protein localises to the cytoplasm. Functionally, associates with the EF-Tu.GDP complex and induces the exchange of GDP to GTP. It remains bound to the aminoacyl-tRNA.EF-Tu.GTP complex up to the GTP hydrolysis stage on the ribosome. The protein is Elongation factor Ts of Rickettsia africae (strain ESF-5).